We begin with the raw amino-acid sequence, 112 residues long: Iron-sulfur cluster assembly protein CyaY (112 aa).

It belongs to the frataxin family.

Its function is as follows. Involved in iron-sulfur (Fe-S) cluster assembly. May act as a regulator of Fe-S biogenesis. This Delftia acidovorans (strain DSM 14801 / SPH-1) protein is Iron-sulfur cluster assembly protein CyaY.